Consider the following 445-residue polypeptide: Vacuolar fusion protein CCZ1 homolog (445 aa).

This sequence belongs to the CCZ1 family.

The polypeptide is Vacuolar fusion protein CCZ1 homolog (Dictyostelium discoideum (Social amoeba)).